Consider the following 626-residue polypeptide: Glycosyltransferase 25 family member (626 aa).

A signal peptide spans 1–21 (MLKKQVFYGILLICAFVCIYG). N-linked (GlcNAc...) asparagine glycosylation is found at Asn113, Asn234, Asn272, and Asn533. The short motif at 623–626 (HQEL) is the Prevents secretion from ER element.

This sequence belongs to the glycosyltransferase 25 family.

The protein resides in the endoplasmic reticulum lumen. In Drosophila pseudoobscura pseudoobscura (Fruit fly), this protein is Glycosyltransferase 25 family member.